Here is a 534-residue protein sequence, read N- to C-terminus: CTP synthase (534 aa).

An amidoligase domain region spans residues 1 to 267; the sequence is MTKYIFVTGG…DQIVCDHLKL (267 aa). S13 serves as a coordination point for CTP. S13 provides a ligand contact to UTP. Position 14–19 (14–19) interacts with ATP; the sequence is SIGKGI. Y54 provides a ligand contact to L-glutamine. D71 contacts ATP. D71 and E141 together coordinate Mg(2+). Residues 148–150, 188–193, and K224 each bind CTP; these read DIE and KTKPTQ. Residues 188 to 193 and K224 each bind UTP; that span reads KTKPTQ. 240–242 contacts ATP; it reads RDV. Residues 292–534 enclose the Glutamine amidotransferase type-1 domain; sequence KIALVGKYVE…FVTAAIKNSN (243 aa). Position 354 (G354) interacts with L-glutamine. The Nucleophile; for glutamine hydrolysis role is filled by C381. L-glutamine contacts are provided by residues 382–385, E405, and R463; that span reads LGMQ. Catalysis depends on residues H508 and E510.

It belongs to the CTP synthase family. Homotetramer.

The catalysed reaction is UTP + L-glutamine + ATP + H2O = CTP + L-glutamate + ADP + phosphate + 2 H(+). It carries out the reaction L-glutamine + H2O = L-glutamate + NH4(+). The enzyme catalyses UTP + NH4(+) + ATP = CTP + ADP + phosphate + 2 H(+). It participates in pyrimidine metabolism; CTP biosynthesis via de novo pathway; CTP from UDP: step 2/2. Allosterically activated by GTP, when glutamine is the substrate; GTP has no effect on the reaction when ammonia is the substrate. The allosteric effector GTP functions by stabilizing the protein conformation that binds the tetrahedral intermediate(s) formed during glutamine hydrolysis. Inhibited by the product CTP, via allosteric rather than competitive inhibition. Its function is as follows. Catalyzes the ATP-dependent amination of UTP to CTP with either L-glutamine or ammonia as the source of nitrogen. Regulates intracellular CTP levels through interactions with the four ribonucleotide triphosphates. This Streptococcus pyogenes serotype M2 (strain MGAS10270) protein is CTP synthase.